The chain runs to 95 residues: Aspartyl/glutamyl-tRNA(Asn/Gln) amidotransferase subunit C (95 aa).

Belongs to the GatC family. In terms of assembly, heterotrimer of A, B and C subunits.

It carries out the reaction L-glutamyl-tRNA(Gln) + L-glutamine + ATP + H2O = L-glutaminyl-tRNA(Gln) + L-glutamate + ADP + phosphate + H(+). The enzyme catalyses L-aspartyl-tRNA(Asn) + L-glutamine + ATP + H2O = L-asparaginyl-tRNA(Asn) + L-glutamate + ADP + phosphate + 2 H(+). Functionally, allows the formation of correctly charged Asn-tRNA(Asn) or Gln-tRNA(Gln) through the transamidation of misacylated Asp-tRNA(Asn) or Glu-tRNA(Gln) in organisms which lack either or both of asparaginyl-tRNA or glutaminyl-tRNA synthetases. The reaction takes place in the presence of glutamine and ATP through an activated phospho-Asp-tRNA(Asn) or phospho-Glu-tRNA(Gln). In Chlorobaculum tepidum (strain ATCC 49652 / DSM 12025 / NBRC 103806 / TLS) (Chlorobium tepidum), this protein is Aspartyl/glutamyl-tRNA(Asn/Gln) amidotransferase subunit C.